The following is a 417-amino-acid chain: Serine hydroxymethyltransferase (417 aa).

Residues leucine 121 and 125–127 (GHL) each bind (6S)-5,6,7,8-tetrahydrofolate. The residue at position 229 (lysine 229) is an N6-(pyridoxal phosphate)lysine. Position 355–357 (355–357 (SPF)) interacts with (6S)-5,6,7,8-tetrahydrofolate.

Belongs to the SHMT family. In terms of assembly, homodimer. Pyridoxal 5'-phosphate serves as cofactor.

Its subcellular location is the cytoplasm. It catalyses the reaction (6R)-5,10-methylene-5,6,7,8-tetrahydrofolate + glycine + H2O = (6S)-5,6,7,8-tetrahydrofolate + L-serine. It participates in one-carbon metabolism; tetrahydrofolate interconversion. It functions in the pathway amino-acid biosynthesis; glycine biosynthesis; glycine from L-serine: step 1/1. In terms of biological role, catalyzes the reversible interconversion of serine and glycine with tetrahydrofolate (THF) serving as the one-carbon carrier. This reaction serves as the major source of one-carbon groups required for the biosynthesis of purines, thymidylate, methionine, and other important biomolecules. Also exhibits THF-independent aldolase activity toward beta-hydroxyamino acids, producing glycine and aldehydes, via a retro-aldol mechanism. This is Serine hydroxymethyltransferase from Aeromonas hydrophila subsp. hydrophila (strain ATCC 7966 / DSM 30187 / BCRC 13018 / CCUG 14551 / JCM 1027 / KCTC 2358 / NCIMB 9240 / NCTC 8049).